Consider the following 627-residue polypeptide: 2-oxoacid:ferredoxin oxidoreductase 1, subunit alpha (627 aa).

The YPITP motif motif lies at 253 to 257 (YPITP). The substrate site is built by threonine 256 and arginine 344.

As to quaternary structure, heterodimer composed of an alpha and a beta subunit.

The enzyme catalyses a 2-oxocarboxylate + 2 oxidized [2Fe-2S]-[ferredoxin] + CoA = an acyl-CoA + 2 reduced [2Fe-2S]-[ferredoxin] + CO2 + H(+). Inhibited by low concentration of 4-fluoro-7-nitrobenzofurazan (NBD-F). Its function is as follows. Catalyzes the coenzyme A-dependent oxidative decarboxylation of different 2-oxoacids such as 2-oxoglutarate, pyruvate and 2-oxobutyrate to form their CoA derivatives. The chain is 2-oxoacid:ferredoxin oxidoreductase 1, subunit alpha from Sulfurisphaera tokodaii (strain DSM 16993 / JCM 10545 / NBRC 100140 / 7) (Sulfolobus tokodaii).